A 466-amino-acid chain; its full sequence is Muscarinic acetylcholine receptor M2 (466 aa).

Over 1-25 (MNNSTYINSSSENVIALESPYKTIE) the chain is Extracellular. Residues Asn-2, Asn-3, and Asn-8 are each glycosylated (N-linked (GlcNAc...) asparagine). A helical transmembrane segment spans residues 26 to 48 (VVFIVLVAGSLSLVTIIGNILVM). Topologically, residues 49-62 (VSIKVNRHLQTVNN) are cytoplasmic. The chain crosses the membrane as a helical span at residues 63 to 83 (YFLFSLACADLIIGIFSMNLY). The Extracellular segment spans residues 84–100 (TLYTVIGYWPLGPVVCD). A disulfide bond links Cys-99 and Cys-179. Residues 101-122 (LWLALDYVVSNASVMNLLIISF) form a helical membrane-spanning segment. The Important for signaling signature appears at 123-125 (DRY). Topologically, residues 123-142 (DRYFCVTKPLTYPVKRTTKM) are cytoplasmic. The helical transmembrane segment at 143 to 165 (AGMMIAAAWVLSFILWAPAILFW) threads the bilayer. Residues 166-187 (QFIVGGRTVPDKDCYIQFFSNP) lie on the Extracellular side of the membrane. A helical transmembrane segment spans residues 188-212 (AVTFGTAIAAFYLPVIIMTVLYWQI). At 213–387 (SRASKSRIKK…PPSREKKVTR (175 aa)) the chain is on the cytoplasmic side. Disordered regions lie at residues 223-265 (GKKE…KVQN) and 279-315 (QGEE…SASQ). Polar residues-rich tracts occupy residues 228–238 (AQNQDPVSPSL) and 246–256 (PNNNNIPTSSD). Positions 287-298 (NDSTSVSVVPSN) are enriched in low complexity. Residues 388 to 410 (TILAILLAFIITWTPYNVMVLIN) traverse the membrane as a helical segment. Topologically, residues 411–418 (SFCASCIP) are extracellular. The cysteines at positions 413 and 416 are disulfide-linked. Residues 419-442 (GTVWTIGYWLCYINSTINPACYAL) traverse the membrane as a helical segment. Positions 436–440 (NPACY) match the Important for signaling motif. The Cytoplasmic portion of the chain corresponds to 443 to 466 (CNATFKKTFKHLLMCHYKNIGATR). Phosphothreonine is present on residues Thr-446, Thr-450, and Thr-465.

This sequence belongs to the G-protein coupled receptor 1 family. Muscarinic acetylcholine receptor subfamily. CHRM2 sub-subfamily.

The protein resides in the cell membrane. The protein localises to the postsynaptic cell membrane. In terms of biological role, the muscarinic acetylcholine receptor mediates various cellular responses, including inhibition of adenylate cyclase, breakdown of phosphoinositides and modulation of potassium channels through the action of G proteins. Primary transducing effect is adenylate cyclase inhibition. Signaling promotes phospholipase C activity, leading to the release of inositol trisphosphate (IP3); this then triggers calcium ion release into the cytosol. This is Muscarinic acetylcholine receptor M2 (CHRM2) from Gallus gallus (Chicken).